We begin with the raw amino-acid sequence, 274 residues long: 2,3,4,5-tetrahydropyridine-2,6-dicarboxylate N-succinyltransferase (274 aa).

Residues Arg104 and Asp141 each coordinate substrate.

This sequence belongs to the transferase hexapeptide repeat family. As to quaternary structure, homotrimer.

It is found in the cytoplasm. It catalyses the reaction (S)-2,3,4,5-tetrahydrodipicolinate + succinyl-CoA + H2O = (S)-2-succinylamino-6-oxoheptanedioate + CoA. The protein operates within amino-acid biosynthesis; L-lysine biosynthesis via DAP pathway; LL-2,6-diaminopimelate from (S)-tetrahydrodipicolinate (succinylase route): step 1/3. In Edwardsiella ictaluri (strain 93-146), this protein is 2,3,4,5-tetrahydropyridine-2,6-dicarboxylate N-succinyltransferase.